A 211-amino-acid chain; its full sequence is Arginine exporter protein ArgO (211 aa).

The next 6 membrane-spanning stretches (helical) occupy residues 1–21, 37–57, 68–88, 111–131, 147–167, and 179–199; these read MISY…PLGP, LMIA…GIFG, LLAL…FGAL, IIAT…DTFV, WFAL…ALLA, and AQRI…FQLA.

This sequence belongs to the LysE/ArgO transporter (TC 2.A.75) family.

Its subcellular location is the cell inner membrane. It catalyses the reaction L-arginine(in) = L-arginine(out). Functionally, involved in the export of arginine. Important to control the intracellular level of arginine and the correct balance between arginine and lysine. This chain is Arginine exporter protein ArgO, found in Salmonella typhimurium (strain LT2 / SGSC1412 / ATCC 700720).